The sequence spans 645 residues: Homeobox protein B-H2 (645 aa).

Disordered regions lie at residues 1 to 50 (MTTM…TTAT), 86 to 134 (SSGG…QAAL), 149 to 176 (RERE…AHHP), 240 to 259 (SHLS…HDER), 265 to 385 (MLQQ…KART), and 553 to 645 (GAQQ…ALEV). The segment covering 18-29 (SAPSATAHHPAA) has biased composition (low complexity). Positions 106–121 (QHHHHHQQQQQHHHHQ) are enriched in basic residues. Low complexity predominate over residues 122–134 (QQQQQQQHQQAAL). Over residues 149–165 (REREREREREHYRERHS) the composition is skewed to basic and acidic residues. The span at 244 to 253 (HQQHHPHLHH) shows a compositional bias: basic residues. Over residues 275–316 (NNNNNNNNSSSASNNNNNNNNSASANSNIISGNSSSSNNNNG) the composition is skewed to low complexity. Residues 317–328 (SGNGNMLLGGPG) show a composition bias toward gly residues. Positions 329 to 339 (SSISGDQASTI) are enriched in polar residues. The span at 362–377 (SSANGDSSSHLSLSLS) shows a compositional bias: low complexity. Residues 380–439 (QRKARTAFTDHQLQTLEKSFERQKYLSVQDRMELANKLELSDCQVKTWYQNRRTKWKRQT) constitute a DNA-binding region (homeobox). Positions 553-574 (GAQQQQQQPPAASRSPATSQSA) are enriched in low complexity. Residues 583 to 592 (TSSSSRQRLI) show a composition bias toward polar residues. Residue Thr-593 is modified to Phosphothreonine. Residues 594-603 (PSPPLNPGSP) are compositionally biased toward pro residues. Phosphoserine occurs at positions 595 and 602. The span at 618–632 (DEERDIERERERERE) shows a compositional bias: basic and acidic residues. Over residues 633–645 (RDEDDEEELALEV) the composition is skewed to acidic residues.

The protein belongs to the Antp homeobox family. In terms of tissue distribution, B-H1 and B-H2 are abundant in the eye-antenna imaginal disk. Expressed in R1 and R6 cells throughout larval stage until 30 hours after puparium formation, at which time expression is seen in the anterior and posterior primary pigment cells. Coexpressed in embryonic glial cells, neurons of the CNS and PNS, most latitudinal anterior cells of the developing notum and the central circular region of the leg and antennal imaginal disk throughout larval development.

The protein resides in the nucleus. In terms of biological role, B-H1 and B-H2 are regulated by members of the wg signaling pathway; wg and dpp. B-H1 and B-H2 are coexpressed and functionally required in R1 and R6 receptor cells and primary pigment cells for normal eye development. Coexpression is also required for the fate determination of external sensory organs, formation of notal microchaetae, formation of presutural macrochaetae, antennal development and for distal leg morphogenesis; segmentation and specification of tarsal segments 3-5. This chain is Homeobox protein B-H2 (B-H2), found in Drosophila melanogaster (Fruit fly).